Consider the following 293-residue polypeptide: 4-hydroxy-tetrahydrodipicolinate synthase (293 aa).

Position 51 (Thr51) interacts with pyruvate. Tyr140 (proton donor/acceptor) is an active-site residue. Lys168 serves as the catalytic Schiff-base intermediate with substrate. Pyruvate is bound at residue Ile209.

It belongs to the DapA family. As to quaternary structure, homotetramer; dimer of dimers.

It localises to the cytoplasm. It carries out the reaction L-aspartate 4-semialdehyde + pyruvate = (2S,4S)-4-hydroxy-2,3,4,5-tetrahydrodipicolinate + H2O + H(+). It functions in the pathway amino-acid biosynthesis; L-lysine biosynthesis via DAP pathway; (S)-tetrahydrodipicolinate from L-aspartate: step 3/4. In terms of biological role, catalyzes the condensation of (S)-aspartate-beta-semialdehyde [(S)-ASA] and pyruvate to 4-hydroxy-tetrahydrodipicolinate (HTPA). This is 4-hydroxy-tetrahydrodipicolinate synthase from Streptococcus mutans serotype c (strain ATCC 700610 / UA159).